The sequence spans 69 residues: Beta-defensin 1 (69 aa).

Residues 1 to 21 (MKTHYFLLVMICFLFSQMEPG) form the signal peptide. A propeptide spanning residues 22–32 (VGILTSLGRRT) is cleaved from the precursor. 3 disulfides stabilise this stretch: cysteine 37–cysteine 66, cysteine 44–cysteine 59, and cysteine 49–cysteine 67.

Belongs to the beta-defensin family. In terms of assembly, monomer. Homodimer. Detected in kidney.

The protein resides in the secreted. It localises to the membrane. In terms of biological role, has bactericidal activity. May act as a ligand for C-C chemokine receptor CCR6. Positively regulates the sperm motility and bactericidal activity in a CCR6-dependent manner. Binds to CCR6 and triggers Ca2+ mobilization in the sperm which is important for its motility. The chain is Beta-defensin 1 (Defb1) from Mus musculus (Mouse).